The primary structure comprises 88 residues: UPF0298 protein Bcer98_2635 (88 aa).

It belongs to the UPF0298 family.

It localises to the cytoplasm. The polypeptide is UPF0298 protein Bcer98_2635 (Bacillus cytotoxicus (strain DSM 22905 / CIP 110041 / 391-98 / NVH 391-98)).